Reading from the N-terminus, the 424-residue chain is Putative histone deacetylase complex subunit cti6 (424 aa).

Disordered regions lie at residues 1–49 (MPSN…GEVT), 117–155 (SKYLGNGKPIEASQTEESSSTPPSPATKKSSKQRLTMNS), 170–341 (KEKS…PDGT), and 381–405 (AQSAGNQSSTKSSKEGPEEEKETLR). Residues 48-103 (VTRCVCGIVESDDEASDGGLYIQCDQCSVWQHGNCVGFADESEVPEVYYCEICHPE) form a PHD-type zinc finger. Over residues 127–137 (EASQTEESSST) the composition is skewed to low complexity. Residue Ser187 is modified to Phosphoserine. Residues 241–256 (DAPEEETVDTVEEIAD) show a composition bias toward acidic residues. The segment covering 257–266 (EEKHSVKEES) has biased composition (basic and acidic residues). Residues 272–287 (QSSQQSTITSISTTTR) are compositionally biased toward low complexity. Residues 294–303 (REAAAEDKAD) show a composition bias toward basic and acidic residues. Residues 313-324 (SKTRKVGGRRGK) show a composition bias toward basic residues. The segment covering 392 to 405 (SSKEGPEEEKETLR) has biased composition (basic and acidic residues).

The protein resides in the cytoplasm. It localises to the nucleus. Its function is as follows. Could be a component of the RPD3C(L) histone deacetylase complex (HDAC). In Schizosaccharomyces pombe (strain 972 / ATCC 24843) (Fission yeast), this protein is Putative histone deacetylase complex subunit cti6 (cti6).